The sequence spans 341 residues: Protein quaking-A (341 aa).

The KH domain occupies 87–153; it reads FVPVKEYPDY…WEHLNEDLHV (67 aa). An SH3-binding motif is present at residues 276-279; that stretch reads PPTP. Positions 324–330 match the Nuclear localization signal motif; sequence RVHPYQR.

It belongs to the quaking family. In terms of assembly, homodimer; does not require RNA to homodimerize.

It is found in the cytoplasm. The protein resides in the nucleus. Its function is as follows. RNA reader protein, which recognizes and binds specific RNAs, thereby regulating RNA metabolic processes, such as pre-mRNA splicing, circular RNA (circRNA) formation, mRNA export, mRNA stability and/or translation. Involved in various cellular processes, such as mRNA storage into stress granules, apoptosis, interferon response, glial cell fate and development. Binds to the 5'-NACUAAY-N(1,20)-UAAY-3' RNA core sequence. Acts as a mRNA modification reader that specifically recognizes and binds mRNA transcripts modified by internal N(7)-methylguanine (m7G). Promotes the formation of circular RNAs (circRNAs): acts by binding to sites flanking circRNA-forming exons. CircRNAs are produced by back-splicing circularization of pre-mRNAs. Required to protect and promote stability of mRNAs which promotes oligodendrocyte differentiation. Acts as an important regulator of muscle development: required during early skeletal myofibril formation by regulating the accumulation of the muscle-specific tropomyosin-3 (tpm3) transcripts. The chain is Protein quaking-A from Danio rerio (Zebrafish).